The sequence spans 451 residues: UBP1-associated protein 2B (451 aa).

The disordered stretch occupies residues 1–86 (MTKKRKLESE…GNEDDDEEEP (86 aa)). Basic and acidic residues-rich tracts occupy residues 25–38 (CEKEDPEIRNVDNQ) and 49–63 (DTLKEMHEEEAKGED). The span at 67–77 (AETSSGSGNQG) shows a compositional bias: polar residues. 2 RRM domains span residues 128 to 236 (RKIF…NVSA) and 227 to 314 (RKIY…QHQH). 2 disordered regions span residues 302–335 (ANDGPKQVKQHQHNHNSHNQNSRYQRNDNNGYGA) and 423–451 (GGYQTQQPGQGGAGRGQHGAGYGGPYMGR). Residues 431 to 451 (GQGGAGRGQHGAGYGGPYMGR) are compositionally biased toward gly residues.

Expressed in shoot meristem and flowers.

Its subcellular location is the nucleus. Its function is as follows. Heterogeneous nuclear ribonucleoprotein (hnRNP)-like protein that acts as a component of a complex regulating the turnover of mRNAs in the nucleus. Binds with high affinity to RNA molecules that contain U-rich sequences in 3'-UTRs. May function in complex with UBP1 and contribute to the stabilization of mRNAs in the nucleus. This Arabidopsis thaliana (Mouse-ear cress) protein is UBP1-associated protein 2B (UBA2B).